We begin with the raw amino-acid sequence, 193 residues long: Large ribosomal subunit protein bL12cy (193 aa).

Residues 1-59 (MAATTLSIATTIRSSSFSSGLASAHHFPSRPLSIEFPFSFGVSSSSTLSHRAIYLHPIS) constitute a chloroplast transit peptide. Positions 170–187 (GVTKDEAEEDKTQLEEAG) are enriched in basic and acidic residues. Residues 170–193 (GVTKDEAEEDKTQLEEAGAKVSIV) form a disordered region.

This sequence belongs to the bacterial ribosomal protein bL12 family.

The protein resides in the plastid. It localises to the chloroplast. This is Large ribosomal subunit protein bL12cy (RPL12B) from Arabidopsis thaliana (Mouse-ear cress).